The chain runs to 524 residues: Excitatory amino acid transporter 3 (524 aa).

The Cytoplasmic segment spans residues methionine 1–asparagine 18. Residues tryptophan 19–valine 38 traverse the membrane as a helical segment. Topologically, residues arginine 39 to arginine 61 are extracellular. The helical transmembrane segment at methionine 62–leucine 82 threads the bilayer. Over aspartate 83–arginine 93 the chain is Cytoplasmic. The helical transmembrane segment at alanine 94 to valine 114 threads the bilayer. Residues tyrosine 98, threonine 101, and threonine 102 each coordinate Na(+). Residues serine 115 to methionine 205 lie on the Extracellular side of the membrane. 2 N-linked (GlcNAc...) asparagine glycosylation sites follow: asparagine 178 and asparagine 195. A helical membrane pass occupies residues tyrosine 206–lysine 229. Topologically, residues tryptophan 230–aspartate 238 are cytoplasmic. The helical transmembrane segment at phenylalanine 239–isoleucine 266 threads the bilayer. The Extracellular portion of the chain corresponds to alanine 267–methionine 286. A helical transmembrane segment spans residues alanine 287 to isoleucine 308. The Cytoplasmic portion of the chain corresponds to valine 309–proline 313. Residues phenylalanine 314–alanine 344 constitute an intramembrane region (discontinuously helical). L-aspartate contacts are provided by serine 331 and serine 333. The Cytoplasmic portion of the chain corresponds to glutamate 345–arginine 353. A helical membrane pass occupies residues isoleucine 354–phenylalanine 380. Na(+) contacts are provided by glycine 362, threonine 364, asparagine 366, and aspartate 368. Position 370 (threonine 370) interacts with L-aspartate. Topologically, residues isoleucine 381–glutamine 393 are extracellular. An intramembrane region (discontinuously helical) is located at residues isoleucine 394–glycine 427. 3 residues coordinate Na(+): serine 405, isoleucine 406, and alanine 408. Valine 411 contacts L-aspartate. The Extracellular portion of the chain corresponds to leucine 428–aspartate 440. The helical transmembrane segment at tryptophan 441–valine 462 threads the bilayer. The L-aspartate site is built by arginine 447, threonine 448, and asparagine 451. Na(+)-binding residues include asparagine 451 and aspartate 455. Residues glutamate 463–phenylalanine 524 are Cytoplasmic-facing. Phosphoserine occurs at positions 517 and 522.

It belongs to the dicarboxylate/amino acid:cation symporter (DAACS) (TC 2.A.23) family. SLC1A1 subfamily. As to quaternary structure, homotrimer. Interacts with ARL6IP5. Interacts with RTN2 (via N-terminus); the interaction promotes cell surface expression of SLC1A1. Interacts with SORCS2; this interaction is important for normal expression at the cell membrane.

It is found in the cell membrane. It localises to the apical cell membrane. The protein resides in the synapse. The protein localises to the synaptosome. Its subcellular location is the early endosome membrane. It is found in the late endosome membrane. It localises to the recycling endosome membrane. The enzyme catalyses K(+)(in) + L-glutamate(out) + 3 Na(+)(out) + H(+)(out) = K(+)(out) + L-glutamate(in) + 3 Na(+)(in) + H(+)(in). It carries out the reaction K(+)(in) + L-aspartate(out) + 3 Na(+)(out) + H(+)(out) = K(+)(out) + L-aspartate(in) + 3 Na(+)(in) + H(+)(in). It catalyses the reaction D-aspartate(out) + K(+)(in) + 3 Na(+)(out) + H(+)(out) = D-aspartate(in) + K(+)(out) + 3 Na(+)(in) + H(+)(in). The catalysed reaction is K(+)(in) + L-cysteine(out) + 3 Na(+)(out) + H(+)(out) = K(+)(out) + L-cysteine(in) + 3 Na(+)(in) + H(+)(in). Sodium-dependent, high-affinity amino acid transporter that mediates the uptake of L-glutamate and also L-aspartate and D-aspartate. Can also transport L-cysteine. Functions as a symporter that transports one amino acid molecule together with two or three Na(+) ions and one proton, in parallel with the counter-transport of one K(+) ion. Mediates Cl(-) flux that is not coupled to amino acid transport; this avoids the accumulation of negative charges due to aspartate and Na(+) symport. Plays an important role in L-glutamate and L-aspartate reabsorption in renal tubuli. Plays a redundant role in the rapid removal of released glutamate from the synaptic cleft, which is essential for terminating the postsynaptic action of glutamate. Contributes to glutathione biosynthesis and protection against oxidative stress via its role in L-glutamate and L-cysteine transport. Negatively regulated by ARL6IP5. This chain is Excitatory amino acid transporter 3 (SLC1A1), found in Bos taurus (Bovine).